The following is a 421-amino-acid chain: Gamma-glutamyl phosphate reductase (421 aa).

The protein belongs to the gamma-glutamyl phosphate reductase family.

The protein localises to the cytoplasm. The enzyme catalyses L-glutamate 5-semialdehyde + phosphate + NADP(+) = L-glutamyl 5-phosphate + NADPH + H(+). It functions in the pathway amino-acid biosynthesis; L-proline biosynthesis; L-glutamate 5-semialdehyde from L-glutamate: step 2/2. Functionally, catalyzes the NADPH-dependent reduction of L-glutamate 5-phosphate into L-glutamate 5-semialdehyde and phosphate. The product spontaneously undergoes cyclization to form 1-pyrroline-5-carboxylate. In Brucella abortus (strain 2308), this protein is Gamma-glutamyl phosphate reductase.